The chain runs to 605 residues: Cell wall integrity and stress response component 4 (605 aa).

An N-terminal signal peptide occupies residues 1–26 (MQTSMVSAKVSIWLVCSVICSSLVRA). The WSC domain occupies 27-110 (TQSVCSSQNT…DKDLFGYIYL (84 aa)). Residues 151-305 (SPTLTSTSTT…PSSTTVTYTS (155 aa)) are disordered. N-linked (GlcNAc...) asparagine glycosylation is found at asparagine 340, asparagine 386, asparagine 389, and asparagine 398. Residues 381-399 (RITNNNNSNTTNSNTPTNK) show a composition bias toward low complexity. A disordered region spans residues 381 to 404 (RITNNNNSNTTNSNTPTNKSTEKK). Residues 415-435 (ATFVVVGVVCLVIICILIYLI) traverse the membrane as a helical segment. Asparagine 479 carries N-linked (GlcNAc...) asparagine glycosylation. Positions 494–521 (GQIMSESPSPRQSTYSLTAGSPPNDPST) are disordered. The span at 497-521 (MSESPSPRQSTYSLTAGSPPNDPST) shows a compositional bias: polar residues. N-linked (GlcNAc...) asparagine glycosylation is found at asparagine 553 and asparagine 583.

It is found in the membrane. The sequence is that of Cell wall integrity and stress response component 4 (WSC4) from Saccharomyces cerevisiae (strain ATCC 204508 / S288c) (Baker's yeast).